The primary structure comprises 586 residues: ATPase family AAA domain-containing protein 3 (586 aa).

A disordered region spans residues Met1–Thr52. N-acetylserine is present on Ser2. Residues Ser2–Phe49 form a required for interaction with the inner surface of the mitochondrial outer membrane region. Over Ser2–Lys245 the chain is Mitochondrial intermembrane. Residues Gly27 to Asp38 are compositionally biased toward gly residues. The stretch at Glu55–Arg218 forms a coiled coil. A helical transmembrane segment spans residues Val246–Ser262. Over Ala263–Glu586 the chain is Mitochondrial matrix. The S100B-binding stretch occupies residues Arg289–Arg304. Gly351–Thr358 contributes to the ATP binding site. At Lys490 the chain carries N6-acetyllysine; alternate. Lys490 carries the N6-succinyllysine; alternate modification. Lys494 and Lys512 each carry N6-acetyllysine.

This sequence belongs to the AAA ATPase family. Can form homooligomers. Homodimer formation at the N-terminus may be regulated by ATP and is required for the interaction with the inner surface of the mitochondrial outer membrane and correct mitochondrial homeostasis. Interacts with components of the mitochondrial ribosome and with other proteins involved in mitochondrial RNA metabolism. May also interact with protein involved in lipid metabolism, including STARD9. May interact with FAM210A. Interacts with GADD45GIP1. Interacts with S100B in a Ca(+2)- and Zn(+2)-dependent manner; this interaction probably occurs in the cytosol prior to mitochondrial targeting. S100B could assist ATAD3A cytoplasmic processing, preventing aggregation and favoring mitochondrial localization. Interacts with HSP60/HSPD1. Forms heterooligomers with ATAD3B; this interaction may affect ATAD3A activity. Interacts with CLPB.

Its subcellular location is the mitochondrion inner membrane. The protein resides in the mitochondrion matrix. It localises to the mitochondrion nucleoid. Its function is as follows. Essential for mitochondrial network organization, mitochondrial metabolism and cell growth at organism and cellular level. May play an important role in mitochondrial protein synthesis. May also participate in mitochondrial DNA replication. May bind to mitochondrial DNA D-loops and contribute to nucleoid stability. Required for enhanced channeling of cholesterol for hormone-dependent steroidogenesis. Involved in mitochondrial-mediated antiviral innate immunity. Also involved in the mitochondrial DNA damage response by promoting signaling between damaged genomes and the mitochondrial membrane, leading to activation of the integrated stress response (ISR). This chain is ATPase family AAA domain-containing protein 3 (ATAD3), found in Bos taurus (Bovine).